The primary structure comprises 264 residues: Thymidylate synthase (264 aa).

Arginine 21 lines the dUMP pocket. Histidine 51 contacts (6R)-5,10-methylene-5,6,7,8-tetrahydrofolate. Position 126–127 (126–127) interacts with dUMP; the sequence is RR. Cysteine 146 functions as the Nucleophile in the catalytic mechanism. Residues 166–169, asparagine 177, and 207–209 each bind dUMP; these read RSAD and HIY. Aspartate 169 provides a ligand contact to (6R)-5,10-methylene-5,6,7,8-tetrahydrofolate. Residue alanine 263 participates in (6R)-5,10-methylene-5,6,7,8-tetrahydrofolate binding.

It belongs to the thymidylate synthase family. Bacterial-type ThyA subfamily. As to quaternary structure, homodimer.

It localises to the cytoplasm. It catalyses the reaction dUMP + (6R)-5,10-methylene-5,6,7,8-tetrahydrofolate = 7,8-dihydrofolate + dTMP. It functions in the pathway pyrimidine metabolism; dTTP biosynthesis. In terms of biological role, catalyzes the reductive methylation of 2'-deoxyuridine-5'-monophosphate (dUMP) to 2'-deoxythymidine-5'-monophosphate (dTMP) while utilizing 5,10-methylenetetrahydrofolate (mTHF) as the methyl donor and reductant in the reaction, yielding dihydrofolate (DHF) as a by-product. This enzymatic reaction provides an intracellular de novo source of dTMP, an essential precursor for DNA biosynthesis. In Ruthia magnifica subsp. Calyptogena magnifica, this protein is Thymidylate synthase.